Here is a 296-residue protein sequence, read N- to C-terminus: Ribosomal RNA small subunit methyltransferase H (296 aa).

S-adenosyl-L-methionine is bound by residues 41 to 43 (GGH), aspartate 60, phenylalanine 87, aspartate 103, and glutamine 110.

Belongs to the methyltransferase superfamily. RsmH family.

It is found in the cytoplasm. It carries out the reaction cytidine(1402) in 16S rRNA + S-adenosyl-L-methionine = N(4)-methylcytidine(1402) in 16S rRNA + S-adenosyl-L-homocysteine + H(+). Specifically methylates the N4 position of cytidine in position 1402 (C1402) of 16S rRNA. The polypeptide is Ribosomal RNA small subunit methyltransferase H (Synechococcus elongatus (strain ATCC 33912 / PCC 7942 / FACHB-805) (Anacystis nidulans R2)).